Consider the following 107-residue polypeptide: MKEPVMRAIKDVTIDIDEPNTVRMNFRTKERVKRTIQRAAALSGLDDSAFTINAAYQSAIATIAAHEATLLQTTDYQAFFDALDNPPKPTDRLRDAFKRYSETVVSK.

The protein belongs to the TacA antitoxin family. As to quaternary structure, forms a complex with cognate antitoxin TacT.

In terms of biological role, probable antitoxin component of a type II toxin-antitoxin (TA) system. Should neutralize cognate toxin TacT (y4aS). The chain is Probable antitoxin TacA from Sinorhizobium fredii (strain NBRC 101917 / NGR234).